The sequence spans 860 residues: Leucine--tRNA ligase (860 aa).

The 'HIGH' region signature appears at 42–52; the sequence is PYPSGRLHMGH. The short motif at 619–623 is the 'KMSKS' region element; that stretch reads KMSKS. Position 622 (Lys622) interacts with ATP.

This sequence belongs to the class-I aminoacyl-tRNA synthetase family.

Its subcellular location is the cytoplasm. It catalyses the reaction tRNA(Leu) + L-leucine + ATP = L-leucyl-tRNA(Leu) + AMP + diphosphate. This Cronobacter sakazakii (strain ATCC BAA-894) (Enterobacter sakazakii) protein is Leucine--tRNA ligase.